Reading from the N-terminus, the 397-residue chain is Erythromycin C-12 hydroxylase (397 aa).

A substrate-binding site is contributed by 74–75 (HE). Heme-binding residues include His81 and Arg85. Gln278 is a binding site for substrate. Arg279 contacts heme. The span at 307–322 (RDSDAHDDPDRFDPSR) shows a compositional bias: basic and acidic residues. The tract at residues 307-326 (RDSDAHDDPDRFDPSRKSGG) is disordered. Heme contacts are provided by His337 and Cys339.

Belongs to the cytochrome P450 family. Monomer. The cofactor is heme b.

It carries out the reaction erythromycin D + NADPH + O2 + H(+) = erythromycin C + NADP(+) + H2O. Its pathway is antibiotic biosynthesis; erythromycin biosynthesis. In terms of biological role, responsible for the C-12 hydroxylation of the macrolactone ring of erythromycin. Thus, EryK catalyzes the hydroxylation of erythromycin D (ErD) at the C-12 position to produce erythromycin C (ErC). Erythromycin B (ErB) is not a substrate for this enzyme. In Saccharopolyspora erythraea (strain ATCC 11635 / DSM 40517 / JCM 4748 / NBRC 13426 / NCIMB 8594 / NRRL 2338), this protein is Erythromycin C-12 hydroxylase (eryK).